A 150-amino-acid polypeptide reads, in one-letter code: Ribosome maturation factor RimP (150 aa).

It belongs to the RimP family.

It is found in the cytoplasm. Its function is as follows. Required for maturation of 30S ribosomal subunits. The protein is Ribosome maturation factor RimP of Acidithiobacillus ferrooxidans (strain ATCC 23270 / DSM 14882 / CIP 104768 / NCIMB 8455) (Ferrobacillus ferrooxidans (strain ATCC 23270)).